We begin with the raw amino-acid sequence, 327 residues long: RING-H2 finger protein ATL34 (327 aa).

Positions 1–26 are cleaved as a signal peptide; sequence MTIGKSPILLHHHVIFLLLLVLQVSG. Residues 47-67 traverse the membrane as a helical segment; that stretch reads AVIIAMLMFTLLFSMLACCVC. Residues 128–170 form an RING-type; atypical zinc finger; it reads CAICLNEFEDEETLRLMPPCSHAFHASCIDVWLSSRSTCPVCR. The segment at 280-327 is disordered; that stretch reads LSHMKTLPQARSSREGYRSGSVGSERRGKGKEKEFGEGSFDRLKAEMV. Over residues 303–327 the composition is skewed to basic and acidic residues; it reads SERRGKGKEKEFGEGSFDRLKAEMV.

This sequence belongs to the RING-type zinc finger family. ATL subfamily.

It localises to the membrane. The enzyme catalyses S-ubiquitinyl-[E2 ubiquitin-conjugating enzyme]-L-cysteine + [acceptor protein]-L-lysine = [E2 ubiquitin-conjugating enzyme]-L-cysteine + N(6)-ubiquitinyl-[acceptor protein]-L-lysine.. It functions in the pathway protein modification; protein ubiquitination. This chain is RING-H2 finger protein ATL34 (ATL34), found in Arabidopsis thaliana (Mouse-ear cress).